A 187-amino-acid chain; its full sequence is Casparian strip membrane protein 1 (187 aa).

Over residues Met-1–Thr-10 the composition is skewed to basic and acidic residues. Residues Met-1 to Arg-20 are disordered. The Cytoplasmic portion of the chain corresponds to Met-1–Ser-27. Residues Val-28–Met-48 form a helical membrane-spanning segment. Over Gly-49–Thr-75 the chain is Extracellular. Residue Asn-52 is glycosylated (N-linked (GlcNAc...) asparagine). Residues Phe-76–Ile-96 traverse the membrane as a helical segment. Over Val-97–Asp-115 the chain is Cytoplasmic. Residues Ala-116–Ala-136 form a helical membrane-spanning segment. Residues His-137–Cys-162 lie on the Extracellular side of the membrane. A helical membrane pass occupies residues Leu-163–Ala-183. Over Leu-184–Arg-187 the chain is Cytoplasmic.

The protein belongs to the Casparian strip membrane proteins (CASP) family. In terms of assembly, homodimer and heterodimers.

The protein resides in the cell membrane. Its function is as follows. Regulates membrane-cell wall junctions and localized cell wall deposition. Required for establishment of the Casparian strip membrane domain (CSD) and the subsequent formation of Casparian strips, a cell wall modification of the root endodermis that determines an apoplastic barrier between the intraorganismal apoplasm and the extraorganismal apoplasm and prevents lateral diffusion. The sequence is that of Casparian strip membrane protein 1 from Zea mays (Maize).